Here is a 472-residue protein sequence, read N- to C-terminus: Ribulose bisphosphate carboxylase large chain 1 (472 aa).

Residues Asn115 and Thr165 each contribute to the substrate site. Lys167 (proton acceptor) is an active-site residue. Position 169 (Lys169) interacts with substrate. Mg(2+) is bound by residues Lys193, Asp195, and Glu196. An N6-carboxylysine modification is found at Lys193. His286 (proton acceptor) is an active-site residue. The substrate site is built by Arg287, His319, and Ser371.

The protein belongs to the RuBisCO large chain family. Type I subfamily. In terms of assembly, heterohexadecamer of 8 large chains and 8 small chains. The cofactor is Mg(2+).

The enzyme catalyses 2 (2R)-3-phosphoglycerate + 2 H(+) = D-ribulose 1,5-bisphosphate + CO2 + H2O. It catalyses the reaction D-ribulose 1,5-bisphosphate + O2 = 2-phosphoglycolate + (2R)-3-phosphoglycerate + 2 H(+). Its function is as follows. RuBisCO catalyzes two reactions: the carboxylation of D-ribulose 1,5-bisphosphate, the primary event in carbon dioxide fixation, as well as the oxidative fragmentation of the pentose substrate. Both reactions occur simultaneously and in competition at the same active site. The protein is Ribulose bisphosphate carboxylase large chain 1 of Hydrogenovibrio marinus.